A 325-amino-acid polypeptide reads, in one-letter code: MIEENLKQKIHDKFVAAKKNGHLKVTHAESKKLKDPQTTTQYWVTFAPSLALKPDANKNSDSKAEDPFANPDEELVVTEDLNGDGEYKLLLNKFPVVPEHSLLVTSEFKDQRSALTPSDLMTAYNVLCSLQGDKDDDVTCERYLVFYNCGPHSGSSQDHKHLQIMQMPEKFIPFQDVLCNGKDHFLPTFNAEPLQDDKVSFAHFVLPLPESSDQVDEDLLAMCYVSLMQRALTFFQDWTNESPELTKSYNVLLTKKWICVVPRSHAKSGPPLMLNINSTGYCGMILVKDREKLENLTEDPHLVDKSLLQCGFPNTAGQKPTEYHY.

Substrate contacts are provided by residues Lys53, 92 to 93 (NK), Asn148, and 154 to 157 (GSSQ). The active-site Nucleophile is the His161. Substrate-binding positions include Gln163, 277 to 279 (NST), Met284, and Lys288.

It belongs to the ATP adenylyltransferase family. Monomer. The cofactor is a divalent metal cation.

It is found in the cytoplasm. The protein localises to the nucleus. It carries out the reaction ADP + ATP + H(+) = P(1),P(4)-bis(5'-adenosyl) tetraphosphate + phosphate. The enzyme catalyses sulfate + ADP + H(+) = adenosine 5'-phosphosulfate + phosphate. Ap4A phosphorylase catalyzes the phosphorolytic degradation of bis(5'-adenosyl) tetraphosphate (Ap4A) into ADP and ATP. Can also use other Np4N' nucleotides (where N and N' stand for A,C,G or U) as substrates, but prefers A-containing substrates. Cannot catalyze the reverse reaction. Additionally, this enzyme can also catalyze the phosphorolytic degradation of adenosine 5'-phosphosulfate (AMPS) into ADP and sulfate, the reversible exchange reaction between inorganic phosphate and the beta-phosphate of a nucleoside diphosphate (NDP), and the synthesis of Ap4A from AMPS plus ATP. This Saccharomyces cerevisiae (strain ATCC 204508 / S288c) (Baker's yeast) protein is Diadenosine 5',5'''-P1,P4-tetraphosphate phosphorylase 2.